A 102-amino-acid polypeptide reads, in one-letter code: Protein translation factor SUI1 homolog (102 aa).

It belongs to the SUI1 family.

In Methanosarcina acetivorans (strain ATCC 35395 / DSM 2834 / JCM 12185 / C2A), this protein is Protein translation factor SUI1 homolog.